We begin with the raw amino-acid sequence, 343 residues long: C-X-C chemokine receptor type 6 (343 aa).

Residues 1 to 33 lie on the Extracellular side of the membrane; sequence MAEYDHYEDDGFLNSFNDSSQEEHQDFLQFRKV. Asn-17 is a glycosylation site (N-linked (GlcNAc...) asparagine). A helical membrane pass occupies residues 34–60; the sequence is FLPCMYLVVFVCGLVGNSLVLVISIFY. The Cytoplasmic segment spans residues 61-69; the sequence is HKLQSLTDV. A helical membrane pass occupies residues 70-90; it reads FLVNLPLADLVFVCTLPFWTY. The Extracellular segment spans residues 91–104; that stretch reads AGIHEWIFGQVMCK. Cys-103 and Cys-181 are oxidised to a cystine. A helical membrane pass occupies residues 105-126; the sequence is TLLGVYTINFYTSMLILTCITV. At 127 to 144 the chain is on the cytoplasmic side; that stretch reads DRFIVVVKATKAYNQQAK. Residues 145 to 165 form a helical membrane-spanning segment; sequence RMTWGKVICLLIWVISLLVSL. Topologically, residues 166–188 are extracellular; that stretch reads PQIIYGNVFNLDKLICGYHDEEI. Residues 189 to 216 form a helical membrane-spanning segment; that stretch reads STVVLATQMTLGFFLPLLAMIVCYSVII. Residues 217–232 lie on the Cytoplasmic side of the membrane; that stretch reads KTLLHAGGFQKHRSLK. A helical transmembrane segment spans residues 233-260; the sequence is IIFLVMAVFLLTQTPFNLVKLIRSTRWE. Residues 261 to 276 are Extracellular-facing; the sequence is YYAMTSFHYTIIVTEA. A helical transmembrane segment spans residues 277–294; it reads IAYLRACLNPVLYAFVSL. Over 295–343 the chain is Cytoplasmic; that stretch reads KFRKNFWKLVKDIGCLPYLGVSHQWKSSEDNSKTFSASHNVEATSMFQL.

It belongs to the G-protein coupled receptor 1 family.

It localises to the cell membrane. Its function is as follows. Receptor for the C-X-C chemokine CXCL16. Used as a coreceptor by SIVs and by strains of HIV-2 and m-tropic HIV-1. This is C-X-C chemokine receptor type 6 (CXCR6) from Macaca fascicularis (Crab-eating macaque).